Consider the following 239-residue polypeptide: Pyridoxine 5'-phosphate synthase (239 aa).

Position 7 (N7) interacts with 3-amino-2-oxopropyl phosphate. Position 9–10 (9–10 (DH)) interacts with 1-deoxy-D-xylulose 5-phosphate. A 3-amino-2-oxopropyl phosphate-binding site is contributed by R18. H43 serves as the catalytic Proton acceptor. R45 and H50 together coordinate 1-deoxy-D-xylulose 5-phosphate. The active-site Proton acceptor is E70. Residue T100 coordinates 1-deoxy-D-xylulose 5-phosphate. The active-site Proton donor is the H192. 3-amino-2-oxopropyl phosphate is bound by residues G193 and 214–215 (GH).

It belongs to the PNP synthase family. Homooctamer; tetramer of dimers.

The protein resides in the cytoplasm. It carries out the reaction 3-amino-2-oxopropyl phosphate + 1-deoxy-D-xylulose 5-phosphate = pyridoxine 5'-phosphate + phosphate + 2 H2O + H(+). The protein operates within cofactor biosynthesis; pyridoxine 5'-phosphate biosynthesis; pyridoxine 5'-phosphate from D-erythrose 4-phosphate: step 5/5. Catalyzes the complicated ring closure reaction between the two acyclic compounds 1-deoxy-D-xylulose-5-phosphate (DXP) and 3-amino-2-oxopropyl phosphate (1-amino-acetone-3-phosphate or AAP) to form pyridoxine 5'-phosphate (PNP) and inorganic phosphate. The protein is Pyridoxine 5'-phosphate synthase of Pelagibacter ubique (strain HTCC1062).